Reading from the N-terminus, the 724-residue chain is uncharacterized protein (724 aa).

4 disordered regions span residues 97-131, 187-252, 309-434, and 454-473; these read RKSF…YPSP, ETKI…FETE, FETE…TSKL, and RGVE…VAEK. The span at 115–128 shows a compositional bias: polar residues; sequence TRSASYSESNNSFY. A coiled-coil region spans residues 187–217; the sequence is ETKIGIEEENEESEILAEEKEEEDNDFSVLE. The segment covering 193–212 has biased composition (acidic residues); the sequence is EEENEESEILAEEKEEEDND. Basic and acidic residues-rich tracts occupy residues 223–252 and 309–322; these read QEIK…FETE and FETE…DHSE. 2 stretches are compositionally biased toward low complexity: residues 323-333 and 347-366; these read TTTSETDSTES and SPQT…SLRS. Residues 367 to 388 show a composition bias toward pro residues; that stretch reads QPPPPPPSPEHKAPAPPPPPPM. Polar residues predominate over residues 400-410; sequence FSKTHSTNGDN. Coiled coils occupy residues 495–522 and 649–678; these read SYFQ…HSFQ and MELA…RAKR.

This is an uncharacterized protein from Arabidopsis thaliana (Mouse-ear cress).